The following is an 816-amino-acid chain: Mitogen-activated protein kinase 7 (816 aa).

The segment at 1-26 is disordered; that stretch reads MAEPLKEEDGEDGSAEPPGPVKAEPA. At Ala-2 the chain carries N-acetylalanine. A required for cytoplasmic targeting region spans residues 2 to 77; sequence AEPLKEEDGE…VVSSARRRLT (76 aa). The 293-residue stretch at 55–347 folds into the Protein kinase domain; the sequence is YEIIETIGNG…AAAALRHPFL (293 aa). ATP is bound by residues 61–69 and Lys-84; that span reads IGNGAYGVV. The required for binding to MAP2K5 stretch occupies residues 78–139; it reads GQQVAIKKIP…FKSVYVVLDL (62 aa). Positions 140-406 are necessary for oligomerization; sequence MESDLHQIIH…QQIRFQPSLQ (267 aa). Asp-182 acts as the Proton acceptor in catalysis. Positions 219-221 match the TXY motif; it reads TEY. The interval 406 to 737 is disordered; that stretch reads QPVASEPGCP…PVFSGTPKGS (332 aa). Residues 407 to 806 form a may not be required for kinase activity; required to stimulate MEF2C activity region; it reads PVASEPGCPD…REIQMDSPML (400 aa). Composition is skewed to pro residues over residues 433 to 445 and 454 to 463; these read SPPP…PGPA and QPPPPVSEPA. Residues 476 to 486 are compositionally biased toward low complexity; that stretch reads KAALKAALLKS. Composition is skewed to basic and acidic residues over residues 502 to 519, 527 to 544, and 563 to 573; these read PEPR…EREE, RAKE…KERG, and DNDRSLLERWT. The Nuclear localization signal motif lies at 505–539; it reads RKPVTAQERQREREEKRRRRQERAKEREKRRQERE. Residues 578 to 587 show a composition bias toward low complexity; that stretch reads PAAPALTSVP. Composition is skewed to pro residues over residues 588-610 and 628-655; these read APAP…PGPV and VPQP…PAPP. Low complexity predominate over residues 676–685; it reads PGSSTPGVLP. Residues 686–695 are compositionally biased toward pro residues; sequence YFPPGLPPPD. Positions 701–720 are enriched in polar residues; sequence QSSMSESPDVNLVTQQLSKS. The residue at position 720 (Ser-720) is a Phosphoserine. Thr-733 carries the post-translational modification Phosphothreonine.

This sequence belongs to the protein kinase superfamily. CMGC Ser/Thr protein kinase family. MAP kinase subfamily. As to quaternary structure, interacts with MAP2K5. Forms oligomers. Interacts with MEF2A, MEF2C and MEF2D; the interaction phosphorylates the MEF2s and enhances transcriptional activity of MEF2A, MEF2C but not MEF2D. Interacts with SGK1. Preferentially interacts with PML isoform PML-4 but shows interaction also with its other isoforms: isoform PML-1, isoform PML-2, isoform PML-3 and isoform PML-6. Interacts (via N-terminal half) with HSP90AB1-CDC37 chaperone complex in resting cells; the interaction is MAP2K5-independent and prevents MAPK7 from ubiquitination and proteasomal degradation. Interacts with STUB1/CHIP; the interaction is enhanced in the presence of IGF1 or MAP2K5 and promotes STUB1/CHIP E3 ligase activity. It depends on Mg(2+) as a cofactor. Post-translationally, dually phosphorylated on Thr-219 and Tyr-221, which activates the enzyme. Autophosphorylated in vitro on threonine and tyrosine residues when the C-terminal part of the kinase, which could have a regulatory role, is absent. As to expression, expressed in many adult tissues. Abundant in heart, placenta, lung, kidney and skeletal muscle. Not detectable in liver.

It is found in the cytoplasm. Its subcellular location is the nucleus. The protein localises to the PML body. The enzyme catalyses L-seryl-[protein] + ATP = O-phospho-L-seryl-[protein] + ADP + H(+). It carries out the reaction L-threonyl-[protein] + ATP = O-phospho-L-threonyl-[protein] + ADP + H(+). Activated by tyrosine and threonine phosphorylation. Activated in response to hyperosmolarity, hydrogen peroxide, and epidermal growth factor (EGF). Functionally, plays a role in various cellular processes such as proliferation, differentiation and cell survival. The upstream activator of MAPK7 is the MAPK kinase MAP2K5. Upon activation, it translocates to the nucleus and phosphorylates various downstream targets including MEF2C. EGF activates MAPK7 through a Ras-independent and MAP2K5-dependent pathway. As part of the MAPK/ERK signaling pathway, acts as a negative regulator of apoptosis in cardiomyocytes via interaction with STUB1/CHIP and promotion of STUB1-mediated ubiquitination and degradation of ICER-type isoforms of CREM. May have a role in muscle cell differentiation. May be important for endothelial function and maintenance of blood vessel integrity. MAP2K5 and MAPK7 interact specifically with one another and not with MEK1/ERK1 or MEK2/ERK2 pathways. Phosphorylates SGK1 at Ser-78 and this is required for growth factor-induced cell cycle progression. Involved in the regulation of p53/TP53 by disrupting the PML-MDM2 interaction. This is Mitogen-activated protein kinase 7 (MAPK7) from Homo sapiens (Human).